We begin with the raw amino-acid sequence, 2067 residues long: MMPQKKRRRKKDIDFLALYEAELLNYASEDDEGELEHEYYKARVYEVVTATGDVRGAGTDANVFITLFGENGLSPKLQLTSKSKSAFEKGNVDVFRVRTNNVGLIYKVRIEHDNTGLNASWYLDHVIVTDMKRPHLRYYFNCNNWLSKVEGDRQWCRDLLASFNPMDMPRGNKYEVKVYTGDVIGAGTDADVFINIFGEYGDTGERRLENEKDNFEKGAEDRFILDAPDLGQLMKINVGHNNKGGSAGWFLSQIVIEDIGNKRKYDFPLNRWLALDEDDGKIQRDILVGGAETTAITYIVTVFTGDVRGAGTKSKIYLVMYGARGNKNSGKIFLEGGVFDRGRTDIFHIELAVLLSPLSRVSVGHGNVGVNRGWFCEKVVILCPFTGIQQTFPCSNWLDEKKADGLIERQLYEMVSLRKKRLKKFPWSLWVWTTDLKKAGTNSPIFIQIYGQKGRTDEILLNPNNKWFKPGIIEKFRIELPDLGRFYKIRVWHDKRSSGSGWHLERMTLMNTLNKDKYNFNCNRWLDANEDDNEIVREMTAEGPTVRRIMGMARYHVTVCTGELEGAGTDANVYLCLFGDVGDTGERLLYNCRNNTDLFEKGNADEFTIESVTMRNVRRVRIRHDGKGSGSGWYLDRVLVREEGQPESDNVEFPCLRWLDKDKDDGQLVRELLPSDSSATLKNFRYHISLKTGDVSGASTDSRVYIKLYGDKSDTIKQVLLVSDNNLKDYFERGRVDEFTLETLNIGNINRLVIGHDSTGMHASWFLGSVQIRVPRQGKQYTFPANRWLDKNQADGRLEVELYPSEVVEIQKLVHYEVEIWTGDVGGAGTSARVYMQIYGEKGKTEVLFLSSRSKVFERASKDTFQTDTFTIYAIDLGALTKIRIRHDNTGNRAGWFLDRIDITDMNNEITYYFPCQRWLAVEEDDGQLSRELLPVDESYVLPQSEEGRGGGDNNPLDNLALEQKDKSTTFSVTIKTGVKKNAGTDANVFITLFGTQDDTGMTLLKSSKTNSDKFERDSIEIFTVETLDLGDLWKVRLGHDNTGKAPGWFVDWVEVDAPSLGKCMTFPCGRWLAKNEDDGSIIRDLFHAELQTRLYTPFVPYEITLYTSDVFAAGTDANIFIIIYGCDAVCTQQKYLCTNKREQKQFFERKSASRFIVELEDVGEIIEKIRIGHNNTGMNPGWHCSHVDIRRLLPDKDGAETLTFPCDRWLATSEDDKKTIRELVPYDIFTEKYMKDGSLRQVYKEVEEPLDIVLYSVQIFTGNIPGAGTDAKVYITIYGDLGDTGERYLGKSENRTNKFERGTADTFIIEAADLGVIYKIKLRHDNSKWCADWYVEKVEIWNDTNEDEFLFLCGRWLSLKKEDGRLERLFYEKEYTGDRSSNCSSPADFWEIALSSKMADVDISTVTGPMADYVQEGPIIPYYVSVTTGKHKDAATDSRAFIFLIGEDDERSKRIWLDYPRGKRGFSRGSVEEFYVAGLDVGIIKKIELGHDGASPESCWLVEELCLAVPTQGTKYMLNCNCWLAKDRGDGITSRVFDLLDAMVVNIGVKVLYEMTVWTGDVVGGGTDSNIFMTLYGINGSTEEMQLDKKKARFEREQNDTFIMEILDIAPFTKMRIRIDGLGSRPEWFLERILLKNMNTGDLTMFYYGDWLSQRKGKKTLVCEMCAVIDEEEMMEWTSYTVAVKTSDILGAGTDANVFIIIFGENGDSGTLALKQSANWNKFERNNTDTFNFPDMLSLGHLCKLRVWHDNKGIFPGWHLSYVDVKDNSRDETFHFQCDCWLSKSEGDGQTVRDFACANNKICDELEETTYEIVIETGNGGETRENVWLILEGRKNRSKEFLMENSSRQRAFRKGTTDTFEFDSIYLGDIASLCVGHLAREDRFIPKRELAWHVKTITITEMEYGNVYFFNCDCLIPLKRKRKYFKVFEVTKTTESFASKVQSLVPVKYEVIVTTGYEPGAGTDANVFVTIFGANGDTGKRELKQKMRNLFERGSTDRFFLETLELGELRKVRLEHDSSGYCSGWLVEKVEVTNTSTGVATIFNCGRWLDKKRGDGLTWRDLFPSV.

15 consecutive PLAT domains span residues 43–160 (RVYE…RDLL), 172–287 (NKYE…RDIL), 296–412 (ITYI…RQLY), 425–540 (FPWS…REMT), 553–673 (ARYH…RELL), 684–803 (FRYH…VELY), 814–934 (VHYE…RELL), 969–1087 (TTFS…RDLF), 1100–1225 (VPYE…RELV), 1254–1372 (VLYS…RLFY), 1421–1539 (IPYY…RVFD), 1552–1667 (VLYE…CEMC), 1679–1797 (TSYT…RDFA), 1810–1931 (TTYE…VFEV), and 1948–2064 (VKYE…RDLF).

It localises to the cell projection. The protein resides in the stereocilium. Functionally, involved in hearing. Required for normal function of hair cells in the inner ear. In Homo sapiens (Human), this protein is Lipoxygenase homology domain-containing protein 1 (LOXHD1).